The following is a 283-amino-acid chain: 1D-myo-inositol 2-acetamido-2-deoxy-alpha-D-glucopyranoside deacetylase (283 aa).

Residues His-15, Asp-18, and His-150 each contribute to the Zn(2+) site.

This sequence belongs to the MshB deacetylase family. Zn(2+) serves as cofactor.

The catalysed reaction is 1D-myo-inositol 2-acetamido-2-deoxy-alpha-D-glucopyranoside + H2O = 1D-myo-inositol 2-amino-2-deoxy-alpha-D-glucopyranoside + acetate. Catalyzes the deacetylation of 1D-myo-inositol 2-acetamido-2-deoxy-alpha-D-glucopyranoside (GlcNAc-Ins) in the mycothiol biosynthesis pathway. The protein is 1D-myo-inositol 2-acetamido-2-deoxy-alpha-D-glucopyranoside deacetylase of Actinosynnema mirum (strain ATCC 29888 / DSM 43827 / JCM 3225 / NBRC 14064 / NCIMB 13271 / NRRL B-12336 / IMRU 3971 / 101).